A 334-amino-acid polypeptide reads, in one-letter code: Small ribosomal subunit protein uS2 (334 aa).

The protein belongs to the universal ribosomal protein uS2 family.

In Xanthobacter autotrophicus (strain ATCC BAA-1158 / Py2), this protein is Small ribosomal subunit protein uS2.